The sequence spans 61 residues: UPF0312 protein (61 aa).

The protein belongs to the UPF0312 family.

This Delftia acidovorans (Pseudomonas acidovorans) protein is UPF0312 protein.